The following is a 661-amino-acid chain: Probable urea active transporter 3 (661 aa).

Transmembrane regions (helical) follow at residues glycine 13–leucine 33, glycine 56–alanine 76, glycine 86–leucine 106, alanine 132–glycine 152, valine 165–leucine 185, valine 197–isoleucine 217, alanine 251–serine 271, tyrosine 288–leucine 308, alanine 352–phenylalanine 372, valine 397–asparagine 417, isoleucine 419–phenylalanine 439, glycine 454–cysteine 474, valine 495–phenylalanine 515, isoleucine 556–methionine 576, and tryptophan 591–leucine 611.

It belongs to the sodium:solute symporter (SSF) (TC 2.A.21) family.

Its subcellular location is the membrane. The protein resides in the golgi apparatus membrane. Its function is as follows. Involved in active transport of urea. The polypeptide is Probable urea active transporter 3 (dur3-3) (Schizosaccharomyces pombe (strain 972 / ATCC 24843) (Fission yeast)).